Reading from the N-terminus, the 463-residue chain is Heterogeneous nuclear ribonucleoprotein K (463 aa).

N-acetylmethionine is present on Met-1. The segment at 1–37 (METEQPEETFPNTETNGEFGKRPAEDMEEEQAFKRSR) is disordered. The interval 1–276 (METEQPEETF…GRGGRPMPPS (276 aa)) is necessary for interaction with DDX1. The span at 19–37 (FGKRPAEDMEEEQAFKRSR) shows a compositional bias: basic and acidic residues. Position 34 is an N6-acetyllysine; alternate (Lys-34). Lys-34 participates in a covalent cross-link: Glycyl lysine isopeptide (Lys-Gly) (interchain with G-Cter in SUMO1); alternate. Lys-34 participates in a covalent cross-link: Glycyl lysine isopeptide (Lys-Gly) (interchain with G-Cter in SUMO2); alternate. Positions 35–197 (RSRNTDEMVE…STDRVVLIGG (163 aa)) are interaction with ASFV p30. At Ser-36 the chain carries Phosphoserine. Thr-39 carries the phosphothreonine modification. The KH 1 domain maps to 42-104 (MVELRILLQS…ETIGEILKKI (63 aa)). Residues Lys-52 and Lys-60 each participate in a glycyl lysine isopeptide (Lys-Gly) (interchain with G-Cter in SUMO2) cross-link. 2 tandem repeats follow at residues 54–76 (AGAVIGKGGKNIKALRTDYNASV) and 59–62 (GKGG). The tract at residues 54–421 (AGAVIGKGGK…QIRHESGASI (368 aa)) is 2 X 22 AA approximate repeats. Positions 59–407 (GKGGKNIKAL…LAGSIIGKGG (349 aa)) are 5 X 4 AA repeats of G-X-G-G. Phosphoserine occurs at positions 75 and 116. The 66-residue stretch at 144–209 (DCELRLLIHQ…DRVVECIKII (66 aa)) folds into the KH 2 domain. Lys-163 is covalently cross-linked (Glycyl lysine isopeptide (Lys-Gly) (interchain with G-Cter in SUMO1); alternate). A Glycyl lysine isopeptide (Lys-Gly) (interchain with G-Cter in SUMO2); alternate cross-link involves residue Lys-163. Lys-198 is subject to N6-acetyllysine. Residues 209–337 (ILDLISESPI…RPGDRYDGMV (129 aa)) are interaction with ZIK1. A phosphoserine mark is found at Ser-214 and Ser-216. Residue Lys-219 forms a Glycyl lysine isopeptide (Lys-Gly) (interchain with G-Cter in SUMO2); alternate linkage. Lys-219 bears the N6-succinyllysine; alternate mark. Positions 236-273 (YGGFTMMFDDRRGRPVGFPMRGRGGFDRMPPGRGGRPM) are RNA-binding RGG-box. 3 tandem repeats follow at residues 245-250 (DRRGRP), 257-260 (GRGG), and 267-270 (GRGG). The interval 245 to 329 (DRRGRPVGFP…LMAYDRRGRP (85 aa)) is 2 X 6 AA approximate repeats. Residues 250–329 (PVGFPMRGRG…LMAYDRRGRP (80 aa)) form a disordered region. Positions 252 to 266 (GFPMRGRGGFDRMPP) are enriched in low complexity. Basic and acidic residues predominate over residues 276 to 285 (SRRDYDDMSP). Ser-284 carries the post-translational modification Phosphoserine. A 3-4 repeat occupies 295 to 298 (GRGG). Arg-316 carries the omega-N-methylarginine modification. A 2-2 repeat occupies 324–329 (DRRGRP). Arg-377 is subject to Omega-N-methylarginine. Ser-379 is subject to Phosphoserine. Position 380 is a phosphotyrosine (Tyr-380). One can recognise a KH 3 domain in the interval 387 to 451 (IITTQVTIPK…DQIQNAQYLL (65 aa)). 2 consecutive repeat copies span residues 399-421 (AGSIIGKGGQRIKQIRHESGASI) and 404-407 (GKGG). N6-acetyllysine; alternate is present on Lys-405. A Glycyl lysine isopeptide (Lys-Gly) (interchain with G-Cter in SUMO2); alternate cross-link involves residue Lys-405. A Phosphoserine modification is found at Ser-420. Lys-422 participates in a covalent cross-link: Glycyl lysine isopeptide (Lys-Gly) (interchain with G-Cter in SUMO1); alternate. Lys-422 is covalently cross-linked (Glycyl lysine isopeptide (Lys-Gly) (interchain with G-Cter in SUMO2); alternate). Lys-422 is covalently cross-linked (Glycyl lysine isopeptide (Lys-Gly) (interchain with G-Cter in SUMO); alternate).

As to quaternary structure, identified in the spliceosome C complex. Part of a transcription inhibitory ribonucleoprotein complex composed at least of the circular RNA circZNF827, ZNF827 and HNRNPL. Interacts with RBM42 and ZIK1. Interacts with BRDT. Interacts with ANKRD28. Interacts with ASFV p30 protein. Interacts with DDX1. Interacts with MDM2; this interaction leads to ubiquitination and proteasomal degradation. Interacts with p53/TP53. Interacts with IVNS1ABP (via BACK domain); the interaction is direct. Interacts with PPIA/CYPA. In terms of assembly, (Microbial infection) Interacts with HCV core protein. In terms of processing, arg-296 and Arg-299 are dimethylated, probably to asymmetric dimethylarginine. Sumoylated by CBX4. Sumoylation is increased upon DNA damage, such as that produced by doxorubicin, etoposide, UV light and camptothecin, due to enhanced CBX4 phosphorylation by HIPK2 under these conditions. Post-translationally, ubiquitinated by MDM2. Doxorubicin treatment does not affect monoubiquitination, but slightly decreases HNRNPK poly-ubiquitination. In terms of processing, O-glycosylated (O-GlcNAcylated), in a cell cycle-dependent manner.

The protein resides in the cytoplasm. Its subcellular location is the nucleus. The protein localises to the nucleoplasm. It is found in the cell projection. It localises to the podosome. One of the major pre-mRNA-binding proteins. Binds tenaciously to poly(C) sequences. Likely to play a role in the nuclear metabolism of hnRNAs, particularly for pre-mRNAs that contain cytidine-rich sequences. Can also bind poly(C) single-stranded DNA. Plays an important role in p53/TP53 response to DNA damage, acting at the level of both transcription activation and repression. When sumoylated, acts as a transcriptional coactivator of p53/TP53, playing a role in p21/CDKN1A and 14-3-3 sigma/SFN induction. As far as transcription repression is concerned, acts by interacting with long intergenic RNA p21 (lincRNA-p21), a non-coding RNA induced by p53/TP53. This interaction is necessary for the induction of apoptosis, but not cell cycle arrest. As part of a ribonucleoprotein complex composed at least of ZNF827, HNRNPL and the circular RNA circZNF827 that nucleates the complex on chromatin, may negatively regulate the transcription of genes involved in neuronal differentiation. The protein is Heterogeneous nuclear ribonucleoprotein K (HNRNPK) of Homo sapiens (Human).